The following is a 283-amino-acid chain: Formamidopyrimidine-DNA glycosylase (283 aa).

The Schiff-base intermediate with DNA role is filled by Pro-2. Glu-3 acts as the Proton donor in catalysis. Lys-61 functions as the Proton donor; for beta-elimination activity in the catalytic mechanism. His-94, Arg-113, and Lys-159 together coordinate DNA. The segment at 245-279 (DAYGREGESCRRCGAVMRREKFMNRSSFYCPKCQP) adopts an FPG-type zinc-finger fold. Arg-269 functions as the Proton donor; for delta-elimination activity in the catalytic mechanism.

This sequence belongs to the FPG family. As to quaternary structure, monomer. Zn(2+) is required as a cofactor.

It catalyses the reaction Hydrolysis of DNA containing ring-opened 7-methylguanine residues, releasing 2,6-diamino-4-hydroxy-5-(N-methyl)formamidopyrimidine.. The catalysed reaction is 2'-deoxyribonucleotide-(2'-deoxyribose 5'-phosphate)-2'-deoxyribonucleotide-DNA = a 3'-end 2'-deoxyribonucleotide-(2,3-dehydro-2,3-deoxyribose 5'-phosphate)-DNA + a 5'-end 5'-phospho-2'-deoxyribonucleoside-DNA + H(+). In terms of biological role, involved in base excision repair of DNA damaged by oxidation or by mutagenic agents. Acts as a DNA glycosylase that recognizes and removes damaged bases. Has a preference for oxidized purines, such as 7,8-dihydro-8-oxoguanine (8-oxoG). Has AP (apurinic/apyrimidinic) lyase activity and introduces nicks in the DNA strand. Cleaves the DNA backbone by beta-delta elimination to generate a single-strand break at the site of the removed base with both 3'- and 5'-phosphates. The protein is Formamidopyrimidine-DNA glycosylase of Mycobacterium avium (strain 104).